Here is a 280-residue protein sequence, read N- to C-terminus: Coiled-coil domain-containing protein 106 (280 aa).

A coiled-coil region spans residues Thr-63–Arg-101. A compositionally biased stretch (basic and acidic residues) spans Glu-103–Ser-121. The interval Glu-103 to Val-176 is disordered. Ser-130 carries the phosphoserine modification. The span at Glu-133–Gly-146 shows a compositional bias: low complexity. The short motif at Arg-151–Arg-164 is the Bipartite nuclear localization signal element. The span at Arg-152–Pro-168 shows a compositional bias: basic residues.

As to quaternary structure, interacts with p53/TP53.

It localises to the nucleus. Promotes the degradation of p53/TP53 protein and inhibits its transactivity. The protein is Coiled-coil domain-containing protein 106 (CCDC106) of Homo sapiens (Human).